The following is a 325-amino-acid chain: L-lactate dehydrogenase 1 (325 aa).

NAD(+)-binding positions include valine 17, aspartate 38, lysine 43, tyrosine 68, and glycine 82–alanine 83. Residues glutamine 85, arginine 91, and asparagine 123–aspartate 126 contribute to the substrate site. NAD(+) is bound by residues alanine 121–asparagine 123 and serine 146. Aspartate 151–arginine 154 lines the substrate pocket. Residues arginine 156 and histidine 171 each contribute to the beta-D-fructose 1,6-bisphosphate site. Histidine 178 functions as the Proton acceptor in the catalytic mechanism. Tyrosine 223 bears the Phosphotyrosine mark. Threonine 232 serves as a coordination point for substrate.

Belongs to the LDH/MDH superfamily. LDH family. Homotetramer.

It localises to the cytoplasm. It catalyses the reaction (S)-lactate + NAD(+) = pyruvate + NADH + H(+). Its pathway is fermentation; pyruvate fermentation to lactate; (S)-lactate from pyruvate: step 1/1. Allosterically activated by fructose 1,6-bisphosphate (FBP). Functionally, catalyzes the conversion of lactate to pyruvate. The chain is L-lactate dehydrogenase 1 from Lactococcus lactis subsp. lactis (strain IL1403) (Streptococcus lactis).